A 281-amino-acid chain; its full sequence is 2-dehydro-3-deoxyphosphooctonate aldolase (281 aa).

The protein belongs to the KdsA family.

It localises to the cytoplasm. The enzyme catalyses D-arabinose 5-phosphate + phosphoenolpyruvate + H2O = 3-deoxy-alpha-D-manno-2-octulosonate-8-phosphate + phosphate. The protein operates within carbohydrate biosynthesis; 3-deoxy-D-manno-octulosonate biosynthesis; 3-deoxy-D-manno-octulosonate from D-ribulose 5-phosphate: step 2/3. It functions in the pathway bacterial outer membrane biogenesis; lipopolysaccharide biosynthesis. This Pseudomonas syringae pv. tomato (strain ATCC BAA-871 / DC3000) protein is 2-dehydro-3-deoxyphosphooctonate aldolase.